Consider the following 158-residue polypeptide: Na(+)/H(+) antiporter subunit E (158 aa).

A run of 2 helical transmembrane segments spans residues 21–41 and 51–71; these read SPSA…LFFF and LWKL…LYLA.

It belongs to the CPA3 antiporters (TC 2.A.63) subunit E family. As to quaternary structure, forms a heterooligomeric complex that consists of seven subunits: MrpA, MrpB, MrpC, MrpD, MrpE, MrpF and MrpG.

The protein localises to the cell membrane. Its function is as follows. Mrp complex is a Na(+)/H(+) antiporter that is considered to be the major Na(+) excretion system in B.subtilis. Has a major role in Na(+) resistance and a minor role in Na(+)- and K(+)-dependent pH homeostasis as compared to TetB. MrpA may be the actual Na(+)/H(+) antiporter, although the six other Mrp proteins are all required for Na(+)/H(+) antiport activity and Na(+) resistance. MrpA is required for initiation of sporulation when external Na(+) concentration increases. Also transports Li(+) but not K(+), Ca(2+) or Mg(2+). This Bacillus subtilis (strain 168) protein is Na(+)/H(+) antiporter subunit E (mrpE).